We begin with the raw amino-acid sequence, 317 residues long: Spore protein CgeB (317 aa).

In terms of biological role, may be involved in maturation of the outermost layer of the spore. May act as a glycosyltransferase that contributes to the glycosylation state of the spore. The polypeptide is Spore protein CgeB (Bacillus subtilis (strain 168)).